Consider the following 111-residue polypeptide: Resistin-like alpha (111 aa).

Positions 1 to 23 (MKTATCSLLICVFLLQLMVPVNT) are cleaved as a signal peptide. Disulfide bonds link Cys55/Cys108, Cys67/Cys107, Cys76/Cys93, Cys78/Cys95, and Cys82/Cys97.

It belongs to the resistin/FIZZ family. In terms of assembly, monomer. In terms of tissue distribution, highest levels in adipose tissue.

It localises to the secreted. Functionally, probable hormone. Plays a role in pulmonary vascular remodeling. In Rattus norvegicus (Rat), this protein is Resistin-like alpha (Retnla).